Reading from the N-terminus, the 230-residue chain is Large ribosomal subunit protein uL1 (230 aa).

The protein belongs to the universal ribosomal protein uL1 family. In terms of assembly, part of the 50S ribosomal subunit.

Binds directly to 23S rRNA. The L1 stalk is quite mobile in the ribosome, and is involved in E site tRNA release. Functionally, protein L1 is also a translational repressor protein, it controls the translation of the L11 operon by binding to its mRNA. This Leptospira interrogans serogroup Icterohaemorrhagiae serovar copenhageni (strain Fiocruz L1-130) protein is Large ribosomal subunit protein uL1.